A 256-amino-acid polypeptide reads, in one-letter code: MAVGKNKRLSKGKKGLKKKVVDPFQRKEWYDIKAPTTFENRNVGKTLINKSTGLKNAVDGLKGRVVEVSLADLQGSEDHSFKKIKLRVDEVQGKNLLTNFHGFDFTSDKVRSLVRKWQSLVEANVTVKTADDYVLRIFCIAFTRRHQNQIKKTTYAQSSQLSAIRKKMVEIMQREVSNVTLAQLTSKLIPEVIGREIEKAAEGIYPLQNVHIRKVKVLKQAKFDLGALLALHGESVTEENGKKVGSEFQDVVLETV.

The residue at position 2 (Ala-2) is an N-acetylalanine; partial.

It belongs to the eukaryotic ribosomal protein eS1 family. In terms of assembly, component of the small ribosomal subunit. Mature ribosomes consist of a small (40S) and a large (60S) subunit. The 40S subunit contains about 33 different proteins and 1 molecule of RNA (18S). The 60S subunit contains about 49 different proteins and 3 molecules of RNA (25S, 5.8S and 5S).

The protein resides in the cytoplasm. In Komagataella phaffii (strain GS115 / ATCC 20864) (Yeast), this protein is Small ribosomal subunit protein eS1.